The following is a 149-amino-acid chain: Histone H2A (149 aa).

Basic residues predominate over residues 1–23 (METAGKAKKGFGGRKGGPRKKSV). Disordered stretches follow at residues 1–25 (META…SVTR) and 127–149 (KTAE…PKKA). Residues 127 to 138 (KTAEKAAKEPKS) are compositionally biased toward basic and acidic residues. Short sequence motifs (SPKK motif) lie at residues 138–141 (SPSK) and 145–148 (SPKK).

The protein belongs to the histone H2A family. The nucleosome is a histone octamer containing two molecules each of H2A, H2B, H3 and H4 assembled in one H3-H4 heterotetramer and two H2A-H2B heterodimers. The octamer wraps approximately 147 bp of DNA.

The protein localises to the nucleus. The protein resides in the chromosome. Core component of nucleosome. Nucleosomes wrap and compact DNA into chromatin, limiting DNA accessibility to the cellular machineries which require DNA as a template. Histones thereby play a central role in transcription regulation, DNA repair, DNA replication and chromosomal stability. DNA accessibility is regulated via a complex set of post-translational modifications of histones, also called histone code, and nucleosome remodeling. In Petroselinum crispum (Parsley), this protein is Histone H2A.